The sequence spans 371 residues: Phospho-N-acetylmuramoyl-pentapeptide-transferase (371 aa).

The next 9 membrane-spanning stretches (helical) occupy residues 25–45 (TLLAAVTSLTIGFVIAPWLIA), 77–94 (MGGLIIFLSVFTSAALWA), 136–156 (IGWQSLATVVALGLLLWHPAS), 172–192 (LIPHMHWAVLLVLIYLWIVGF), 204–224 (GLAIGCTIPVALVFGIMAYVA), 240–260 (GTGELAVICGALIGGCMAFLW), 269–289 (FMGDTGSLALGGLIGVMAFMI), 296–316 (VIVGGVFVAEMLSVVVQVGVF), and 348–368 (KVVLRFWVLSLGCALAGLATL).

This sequence belongs to the glycosyltransferase 4 family. MraY subfamily. Requires Mg(2+) as cofactor.

It is found in the cell inner membrane. It carries out the reaction UDP-N-acetyl-alpha-D-muramoyl-L-alanyl-gamma-D-glutamyl-meso-2,6-diaminopimeloyl-D-alanyl-D-alanine + di-trans,octa-cis-undecaprenyl phosphate = di-trans,octa-cis-undecaprenyl diphospho-N-acetyl-alpha-D-muramoyl-L-alanyl-D-glutamyl-meso-2,6-diaminopimeloyl-D-alanyl-D-alanine + UMP. Its pathway is cell wall biogenesis; peptidoglycan biosynthesis. In terms of biological role, catalyzes the initial step of the lipid cycle reactions in the biosynthesis of the cell wall peptidoglycan: transfers peptidoglycan precursor phospho-MurNAc-pentapeptide from UDP-MurNAc-pentapeptide onto the lipid carrier undecaprenyl phosphate, yielding undecaprenyl-pyrophosphoryl-MurNAc-pentapeptide, known as lipid I. This Opitutus terrae (strain DSM 11246 / JCM 15787 / PB90-1) protein is Phospho-N-acetylmuramoyl-pentapeptide-transferase.